Reading from the N-terminus, the 57-residue chain is Large ribosomal subunit protein bL32 (57 aa).

The segment at 1–21 (MAVPKRRTSKKVKNQRRTHKK) is disordered.

It belongs to the bacterial ribosomal protein bL32 family.

The sequence is that of Large ribosomal subunit protein bL32 from Oceanobacillus iheyensis (strain DSM 14371 / CIP 107618 / JCM 11309 / KCTC 3954 / HTE831).